A 61-amino-acid chain; its full sequence is Metallothionein-1C (61 aa).

A beta region spans residues 1–29; it reads MDPNCSCSTGGSCSCAGSCTCKACRCTSC. 20 residues coordinate a divalent metal cation: Cys-5, Cys-7, Cys-13, Cys-15, Cys-19, Cys-21, Cys-24, Cys-26, Cys-29, Cys-33, Cys-34, Cys-36, Cys-37, Cys-41, Cys-44, Cys-48, Cys-50, Cys-57, Cys-59, and Cys-60. The segment at 30 to 61 is alpha; sequence KKSCCSCCPAGCARCAQGCICKGASDKCSCCA.

The protein belongs to the metallothionein superfamily. Type 1 family. In terms of assembly, monomer.

Metallothioneins have a high content of cysteine residues that bind various heavy metals; these proteins are transcriptionally regulated by both heavy metals and glucocorticoids. This is Metallothionein-1C (MT1C) from Sus scrofa (Pig).